The primary structure comprises 289 residues: CRISPR system Cms protein Csm4 (289 aa).

This sequence belongs to the CRISPR-associated Csm4 family. In terms of assembly, probably part of the Csm effector complex, that includes Cas10, Csm2, Csm3, Csm4, Csm5 and mature crRNA. Interacts with Cas10 (csm1).

Its function is as follows. CRISPR (clustered regularly interspaced short palindromic repeat) is an adaptive immune system that provides protection against mobile genetic elements (viruses, transposable elements and conjugative plasmids). CRISPR clusters contain spacers, sequences complementary to antecedent mobile elements, and target invading nucleic acids. CRISPR clusters are transcribed and processed into CRISPR RNA (crRNA). The type III-A Csm effector complex binds crRNA and acts as a crRNA-guided RNase, DNase and cyclic oligoadenylate synthase; binding of target RNA cognate to the crRNA is required for all activities. The subunit probably binds to the 5' handle of the crRNA, helping in discrimination between self- and non-self. In Thermococcus onnurineus (strain NA1), this protein is CRISPR system Cms protein Csm4.